Reading from the N-terminus, the 153-residue chain is 3-hydroxyacyl-[acyl-carrier-protein] dehydratase FabZ (153 aa).

Residue histidine 52 is part of the active site.

Belongs to the thioester dehydratase family. FabZ subfamily.

It localises to the cytoplasm. The enzyme catalyses a (3R)-hydroxyacyl-[ACP] = a (2E)-enoyl-[ACP] + H2O. Involved in unsaturated fatty acids biosynthesis. Catalyzes the dehydration of short chain beta-hydroxyacyl-ACPs and long chain saturated and unsaturated beta-hydroxyacyl-ACPs. In Magnetococcus marinus (strain ATCC BAA-1437 / JCM 17883 / MC-1), this protein is 3-hydroxyacyl-[acyl-carrier-protein] dehydratase FabZ.